The sequence spans 901 residues: Schlafen family member 11 (901 aa).

Glutamate 209 and glutamate 214 together coordinate Mg(2+). Lysine 216 is a catalytic residue. Histidine 285, cysteine 287, cysteine 321, and cysteine 322 together coordinate Zn(2+). 599–606 (GLPGSGKT) contributes to the ATP binding site.

Belongs to the Schlafen family. Subgroup III subfamily. In terms of assembly, homodimer. Interacts with MCM3. Interacts with DHX9. Interacts with RPA1. Requires Mg(2+) as cofactor. Exhibits a wider expression range in ovarian and colon adenocarcinoma than in their corresponding healthy tissues.

It is found in the nucleus. The protein resides in the chromosome. Functionally, inhibitor of DNA replication that promotes cell death in response to DNA damage. Acts as a guardian of the genome by killing cells with defective replication. Persistently blocks stressed replication forks by opening chromatin across replication initiation sites at stressed replication forks, possibly leading to unwind DNA ahead of the MCM helicase and block fork progression, ultimately leading to cell death. Upon DNA damage, inhibits translation of ATR or ATM based on distinct codon usage without disrupting early DNA damage response signaling. Antiviral restriction factor with manganese-dependent type II tRNA endoribonuclease. A single tRNA molecule is bound and cleaved by the SLFN11 dimer. Specifically abrogates the production of retroviruses such as human immunodeficiency virus 1 (HIV-1) by acting as a specific inhibitor of the synthesis of retroviruses encoded proteins in a codon-usage-dependent manner. Impairs the replication of human cytomegalovirus (HCMV) and some Flaviviruses. Exploits the unique viral codon bias towards A/T nucleotides. Also acts as an interferon (IFN)-induced antiviral protein which acts as an inhibitor of retrovirus protein synthesis. The chain is Schlafen family member 11 from Homo sapiens (Human).